The following is a 921-amino-acid chain: Isoleucine--tRNA ligase (921 aa).

A 'HIGH' region motif is present at residues Pro57–His67. Glu552 is an L-isoleucyl-5'-AMP binding site. A 'KMSKS' region motif is present at residues Lys593–Ser597. Position 596 (Lys596) interacts with ATP. Cys888, Cys891, Cys908, and Cys911 together coordinate Zn(2+).

This sequence belongs to the class-I aminoacyl-tRNA synthetase family. IleS type 1 subfamily. As to quaternary structure, monomer. Zn(2+) serves as cofactor.

The protein localises to the cytoplasm. It catalyses the reaction tRNA(Ile) + L-isoleucine + ATP = L-isoleucyl-tRNA(Ile) + AMP + diphosphate. Functionally, catalyzes the attachment of isoleucine to tRNA(Ile). As IleRS can inadvertently accommodate and process structurally similar amino acids such as valine, to avoid such errors it has two additional distinct tRNA(Ile)-dependent editing activities. One activity is designated as 'pretransfer' editing and involves the hydrolysis of activated Val-AMP. The other activity is designated 'posttransfer' editing and involves deacylation of mischarged Val-tRNA(Ile). This chain is Isoleucine--tRNA ligase, found in Listeria monocytogenes serovar 1/2a (strain ATCC BAA-679 / EGD-e).